A 173-amino-acid chain; its full sequence is Bifunctional protein PyrR (173 aa).

The PRPP-binding signature appears at 93–105; sequence VILIDDVLYTGRT.

It belongs to the purine/pyrimidine phosphoribosyltransferase family. PyrR subfamily. Homodimer and homohexamer; in equilibrium.

The catalysed reaction is UMP + diphosphate = 5-phospho-alpha-D-ribose 1-diphosphate + uracil. Functionally, regulates transcriptional attenuation of the pyrimidine nucleotide (pyr) operon by binding in a uridine-dependent manner to specific sites on pyr mRNA. This disrupts an antiterminator hairpin in the RNA and favors formation of a downstream transcription terminator, leading to a reduced expression of downstream genes. Its function is as follows. Also displays a weak uracil phosphoribosyltransferase activity which is not physiologically significant. The polypeptide is Bifunctional protein PyrR (Streptococcus pyogenes serotype M49 (strain NZ131)).